The sequence spans 447 residues: Gamma-glutamyl phosphate reductase (447 aa).

It belongs to the gamma-glutamyl phosphate reductase family.

Its subcellular location is the cytoplasm. It carries out the reaction L-glutamate 5-semialdehyde + phosphate + NADP(+) = L-glutamyl 5-phosphate + NADPH + H(+). It participates in amino-acid biosynthesis; L-proline biosynthesis; L-glutamate 5-semialdehyde from L-glutamate: step 2/2. Catalyzes the NADPH-dependent reduction of L-glutamate 5-phosphate into L-glutamate 5-semialdehyde and phosphate. The product spontaneously undergoes cyclization to form 1-pyrroline-5-carboxylate. The chain is Gamma-glutamyl phosphate reductase from Methanosarcina acetivorans (strain ATCC 35395 / DSM 2834 / JCM 12185 / C2A).